Here is an 832-residue protein sequence, read N- to C-terminus: Subtilisin-like protease SBT2.4 (832 aa).

The signal sequence occupies residues 1 to 27 (METNPRKLRSYSYICLIVCIFVLVVCA). The Inhibitor I9 domain occupies 74 to 138 (EAKKIEEIHD…VEEDKGVKLM (65 aa)). Residues 150–690 (QQVWQKISNE…AGHVNPARAL (541 aa)) enclose the Peptidase S8 domain. Aspartate 174 (charge relay system) is an active-site residue. Residues asparagine 196 and asparagine 238 are each glycosylated (N-linked (GlcNAc...) asparagine). Catalysis depends on histidine 252, which acts as the Charge relay system. Positions 425 to 524 (TNGSVLQPLT…SAAQIILRYY (100 aa)) constitute a PA domain. Residue asparagine 426 is glycosylated (N-linked (GlcNAc...) asparagine). Serine 618 acts as the Charge relay system in catalysis. N-linked (GlcNAc...) asparagine glycans are attached at residues asparagine 761, asparagine 774, and asparagine 800.

Belongs to the peptidase S8 family.

The protein resides in the secreted. Its function is as follows. Serine protease required for epidermal surface formation in embryos and juvenile plants. Involved in embryonic cuticle formation downstream of BHLH95/ZOU. This chain is Subtilisin-like protease SBT2.4, found in Arabidopsis thaliana (Mouse-ear cress).